The primary structure comprises 785 residues: Probable cationic amino acid transporter (785 aa).

15 helical membrane passes run 58-78 (LVSL…SGLV), 83-103 (AGPG…LSGV), 119-141 (AYTY…NLIL), 187-207 (YPDI…ALGV), 216-236 (VLNV…LFFV), 251-271 (WSGV…FDII), 291-311 (ASLV…TLMV), 337-357 (IVAI…LFPM), 360-380 (VIYA…VSTY), 384-404 (PAVA…LVSL), 407-427 (LIEM…VCVL), 568-588 (CVVL…FGSG), 596-616 (WAVL…FIII), 628-648 (MAPC…YLML), and 655-675 (WIRF…YGMW). The tract at residues 715–785 (DQGPFQNWGK…VDDDLDDPLE (71 aa)) is disordered. The span at 727–740 (QQKQPQQEQSEPQS) shows a compositional bias: low complexity. Residues 775–785 (VVDDDLDDPLE) are compositionally biased toward acidic residues.

This sequence belongs to the amino acid-polyamine-organocation (APC) superfamily.

The protein resides in the lysosome membrane. Its function is as follows. May be involved in arginine transport. This Danio rerio (Zebrafish) protein is Probable cationic amino acid transporter (slc7a14a).